A 213-amino-acid polypeptide reads, in one-letter code: MRMRHKPWADDYLAENSHIVISEPSQYKGKWHSVFGNDNPIHIEVGTGKGQFISGMALQNPDVNYIGIELFKSVIVTAVDKVKQTEAPNVKLLNINANMLSDVFADGEVDRVYLNFSDPWPKKRHEKRRLTNHAFLKKYEQVLGGKGAIHFKTDNRGLFEYSLTSFSEYGLVLTFVSLDLHQSDFEGNVMTEYEEKFAAKGQPIYRVEAEWRT.

S-adenosyl-L-methionine contacts are provided by E44, E69, N96, and D118. D118 is an active-site residue. Residue K122 coordinates substrate. Residues 124 to 129 (RHEKRR) are interaction with RNA. Substrate is bound by residues D154 and 191–194 (TEYE).

This sequence belongs to the class I-like SAM-binding methyltransferase superfamily. TrmB family.

The enzyme catalyses guanosine(46) in tRNA + S-adenosyl-L-methionine = N(7)-methylguanosine(46) in tRNA + S-adenosyl-L-homocysteine. Its pathway is tRNA modification; N(7)-methylguanine-tRNA biosynthesis. Functionally, catalyzes the formation of N(7)-methylguanine at position 46 (m7G46) in tRNA. The protein is tRNA (guanine-N(7)-)-methyltransferase of Bacillus licheniformis (strain ATCC 14580 / DSM 13 / JCM 2505 / CCUG 7422 / NBRC 12200 / NCIMB 9375 / NCTC 10341 / NRRL NRS-1264 / Gibson 46).